A 552-amino-acid chain; its full sequence is Histone deacetylase 15 (552 aa).

A RanBP2-type zinc finger spans residues 86–115; that stretch reads EFVKWCCVNCTMSNPGDMVHCCICGEHKES. Positions 149 to 462 are histone deacetylase; it reads STAVGFDERM…ATAVIKVLLG (314 aa). The Proton donor/acceptor role is filled by His-277. Residues Asp-313, His-315, and Asp-404 each coordinate Zn(2+).

Belongs to the histone deacetylase family. HD type 2 subfamily. Interacts with PIF3 in the dark. Interacts with HY5. Interacts with MYB96. Forms homotetramers. Requires Zn(2+) as cofactor. In terms of tissue distribution, expressed in stems, leaves, flowers, siliques and mature seeds.

The protein localises to the nucleus. Its subcellular location is the cytoplasm. It carries out the reaction N(6)-acetyl-L-lysyl-[histone] + H2O = L-lysyl-[histone] + acetate. Inhibited by trichostatin A (TSA), a well-known histone deacetylase inhibitor. Functionally, responsible for the deacetylation of lysine residues on the N-terminal part of the core histones (H2A, H2B, H3 and H4). Histone deacetylation gives a tag for epigenetic repression and plays an important role in transcriptional regulation, cell cycle progression and developmental events. Histone deacetylases act via the formation of large multiprotein complexes. Represses chlorophyll biosynthesis and photosynthesis in the dark. Is recruited by PIF3 to the promoters of chlorophyll biosynthetic and photosynthetic genes, and represses their transcription by histone deacetylation. Involved in the repression of hypocotyl cell elongation to promote photomorphogenesis. Is recruited by HY5 to the promoters of a subset of cell wall organization and auxin signaling-related genes, and represses gene expression by decreasing the levels of histone H4 acetylation in a light-dependent manner. Promotes abscisic acid (ABA) signaling. Is recruited by MYB96 to the promoters of a subset of Rho GTPase (ROP) genes, which repress ABA signaling at the early stages of signal transduction. Represses ROP expression by removing acetyl groups of histone H3 and H4 from the cognate regions, particularly in the presence of ABA. Represses the plant response to elevated ambient temperature by directly repressing warm temperature-responsive genes. The sequence is that of Histone deacetylase 15 from Arabidopsis thaliana (Mouse-ear cress).